A 630-amino-acid polypeptide reads, in one-letter code: Ubiquitin-like modifier-activating enzyme ATG7 (630 aa).

The GXGXXG motif motif lies at G331–G336. C507 serves as the catalytic Glycyl thioester intermediate. The tract at residues A591 to A630 is homodimerization.

It belongs to the ATG7 family. As to quaternary structure, homodimer; homodimerization is required for ATP-binding. Interacts with ATG8 through a thioester bond between Cys-507 and the C-terminal 'Gly-116' of ATG8 and with ATG12 through a thioester bond between Cys-507 and the C-terminal 'Gly-186' of ATG12. Also interacts with ATG3.

The protein localises to the cytoplasm. It localises to the preautophagosomal structure. Functionally, E1-like activating enzyme involved in the 2 ubiquitin-like systems required for cytoplasm to vacuole transport (Cvt) and autophagy. Activates ATG12 for its conjugation with ATG5 and ATG8 for its conjugation with phosphatidylethanolamine. Both systems are needed for the ATG8 association to Cvt vesicles and autophagosomes membranes. Autophagy is essential for maintenance of amino acid levels and protein synthesis under nitrogen starvation. Required for selective autophagic degradation of the nucleus (nucleophagy) as well as for mitophagy which contributes to regulate mitochondrial quantity and quality by eliminating the mitochondria to a basal level to fulfill cellular energy requirements and preventing excess ROS production. Plays a role in the regulation of filamentous growth and chronological longevity. The protein is Ubiquitin-like modifier-activating enzyme ATG7 (ATG7) of Saccharomyces cerevisiae (strain ATCC 204508 / S288c) (Baker's yeast).